A 492-amino-acid polypeptide reads, in one-letter code: Cell death protein 6 (492 aa).

A compositionally biased stretch (low complexity) spans 19-29; it reads GNNINGEGSSS. The interval 19 to 38 is disordered; that stretch reads GNNINGEGSSSPSTSAPQVK. The region spanning 55 to 215 is the PID domain; that stretch reads INGHVEYVAR…YILKKKIVEL (161 aa). Disordered regions lie at residues 241-385 and 464-492; these read TGPP…STAA and TGDL…NLKQ. Residues 244–268 are compositionally biased toward pro residues; that stretch reads PIYPGLGPPALPLSPMPQGPPPNIP. A compositionally biased stretch (low complexity) spans 300–312; that stretch reads ASPSVSPASTSPS. A compositionally biased stretch (pro residues) spans 313 to 333; that stretch reads GPAPSIPPPRPPALAPPPPVA. Residues 373-383 are compositionally biased toward basic and acidic residues; the sequence is FDPRAGEKKST.

The protein belongs to the ced-6 family. Homodimer. Interacts with ced-1. Interacts with E3 ubiquitin-protein ligase trim-21. As to expression, detected in gonadal sheath cells.

Its subcellular location is the cytoplasm. Its function is as follows. May function as an adapter protein in a pathway that mediates recognition and phagocytosis of apoptotic cells during normal development. Promotes engulfment of cells at both early and late stages of apoptosis. Required for actin reorganization around apoptotic cells. Plays a role in protecting dopaminergic neurons from oxidative stress-induced degeneration. Mediates recruitment of E3 ubiquitin-protein ligase trim-21 to the apoptotic cell surface which promotes ubiquitination and degradation of ced-1. The sequence is that of Cell death protein 6 from Caenorhabditis elegans.